We begin with the raw amino-acid sequence, 238 residues long: Insulin-like growth factor-binding protein 6 (238 aa).

The first 25 residues, 1–25 (MTWDGLPTQPLLMLLMLLFAAGSGS), serve as a signal peptide directing secretion. In terms of domain architecture, IGFBP N-terminal spans 26-108 (ALAGCPGCGA…LIGQGRCQRA (83 aa)). 5 cysteine pairs are disulfide-bonded: Cys-30–Cys-33, Cys-41–Cys-45, Cys-58–Cys-64, Cys-72–Cys-85, and Cys-79–Cys-105. Residues 104–159 (RCQRARGPSEETTKESKPQGGASRSRDTNHRDRQKNPRTSAAPIRPNPVQDSEMGP) are disordered. Basic and acidic residues-rich tracts occupy residues 110-120 (GPSEETTKESK) and 127-138 (RSRDTNHRDRQK). The region spanning 157-232 (MGPCRRHLDS…SPDGQGSTQC (76 aa)) is the Thyroglobulin type-1 domain. Cystine bridges form between Cys-160–Cys-188, Cys-199–Cys-210, and Cys-212–Cys-232. The interval 218–238 (QPLPVSPDGQGSTQCSARSSG) is disordered. The span at 226 to 238 (GQGSTQCSARSSG) shows a compositional bias: polar residues.

Interacts (via C-terminal domain) with PHB2. Post-translationally, O-glycosylated.

Its subcellular location is the secreted. IGF-binding proteins prolong the half-life of the IGFs and have been shown to either inhibit or stimulate the growth promoting effects of the IGFs on cell culture. They alter the interaction of IGFs with their cell surface receptors. Activates the MAPK signaling pathway and induces cell migration. The chain is Insulin-like growth factor-binding protein 6 (Igfbp6) from Mus musculus (Mouse).